A 141-amino-acid polypeptide reads, in one-letter code: Hemoglobin subunit alpha (141 aa).

Positions 1–141 (VLSAADKGHV…VSTVLTSKYR (141 aa)) constitute a Globin domain. S3 is modified (phosphoserine). Residues K7 and K11 each carry the N6-succinyllysine modification. K16 is subject to N6-acetyllysine; alternate. Position 16 is an N6-succinyllysine; alternate (K16). Y24 is modified (phosphotyrosine). At S35 the chain carries Phosphoserine. K40 is subject to N6-succinyllysine. S49 is modified (phosphoserine). O2 is bound at residue H58. H87 provides a ligand contact to heme b. At S102 the chain carries Phosphoserine. T108 is modified (phosphothreonine). At S124 the chain carries Phosphoserine. Residues T134 and T137 each carry the phosphothreonine modification. Residue S138 is modified to Phosphoserine.

This sequence belongs to the globin family. As to quaternary structure, heterotetramer of two alpha chains and two beta chains. In terms of tissue distribution, red blood cells.

Functionally, involved in oxygen transport from the lung to the various peripheral tissues. Its function is as follows. Hemopressin acts as an antagonist peptide of the cannabinoid receptor CNR1. Hemopressin-binding efficiently blocks cannabinoid receptor CNR1 and subsequent signaling. The protein is Hemoglobin subunit alpha (HBA) of Macropus giganteus (Eastern gray kangaroo).